The chain runs to 260 residues: Acetylglutamate kinase (260 aa).

Residues glycine 41–glycine 42, arginine 63, and asparagine 156 each bind substrate.

The protein belongs to the acetylglutamate kinase family. ArgB subfamily.

It localises to the cytoplasm. The enzyme catalyses N-acetyl-L-glutamate + ATP = N-acetyl-L-glutamyl 5-phosphate + ADP. It participates in amino-acid biosynthesis; L-arginine biosynthesis; N(2)-acetyl-L-ornithine from L-glutamate: step 2/4. Functionally, catalyzes the ATP-dependent phosphorylation of N-acetyl-L-glutamate. In Halalkalibacterium halodurans (strain ATCC BAA-125 / DSM 18197 / FERM 7344 / JCM 9153 / C-125) (Bacillus halodurans), this protein is Acetylglutamate kinase.